The primary structure comprises 545 residues: uncharacterized protein (545 aa).

Residues 1–10 (MSRYRFRKAR) are compositionally biased toward basic residues. A disordered region spans residues 1–25 (MSRYRFRKARSNWPMGQNDSRWEPP). WD repeat units lie at residues 417–456 (ACNT…NPMM) and 460–501 (GHSN…MLCS).

This is an uncharacterized protein from Caenorhabditis elegans.